The sequence spans 226 residues: Respiratory nitrate reductase 2 gamma chain (226 aa).

Over 1-4 the chain is Periplasmic; sequence MIQY. A helical transmembrane segment spans residues 5–30; sequence LNVFFYDIYPYICATVFFLGSWLRYD. Residues 31–48 lie on the Cytoplasmic side of the membrane; the sequence is YGQYTWRASSSQMLDKRG. A helical transmembrane segment spans residues 49–71; the sequence is MVIWSNLFHIGILGIFFGHLFGM. The heme b site is built by H57 and H67. The Periplasmic portion of the chain corresponds to 72-83; the sequence is LTPHWMYAWFLP. A helical transmembrane segment spans residues 84–113; it reads VAAKQLMAMVLGGICGVLTLIGGAGLLWRR. Topologically, residues 114-125 are cytoplasmic; sequence LTNQRVRATSTT. The helical transmembrane segment at 126–149 threads the bilayer; sequence PDIIIMSILLIQCLLGLSTIPFSA. At 150 to 183 the chain is on the periplasmic side; it reads QYPDGSEMMKLVGWAQSIVTFRGGSSEMLNGVAF. The helical transmembrane segment at 184 to 199 threads the bilayer; the sequence is VFRLHLVLGMTIFLLF. Heme b is bound by residues H188 and H206. The Cytoplasmic portion of the chain corresponds to 200-226; the sequence is PFTRLVHVWSAPFEYFTRRYQIVRSRR.

In terms of assembly, dimer of heterotrimers each composed of an alpha, a beta and a gamma chain. Alpha and beta are catalytic chains; gamma chains are involved in binding the enzyme complex to the cytoplasmic membrane. Heme is required as a cofactor.

It is found in the cell inner membrane. The catalysed reaction is nitrate + a quinol = a quinone + nitrite + H2O. This is a second nitrate reductase enzyme which can substitute for the NRA enzyme and allows E.coli to use nitrate as an electron acceptor during anaerobic growth. The gamma chain is a membrane-embedded heme-iron unit resembling cytochrome b, which transfers electrons from quinones to the beta subunit. The protein is Respiratory nitrate reductase 2 gamma chain (narV) of Escherichia coli (strain K12).